The following is a 117-amino-acid chain: PBP1-interacting protein XAC1 (117 aa).

A disordered region spans residues 1 to 60; it reads MSKAPSQPAKKWMSARTLAKSEDATNRKSNTAAPASQPSQQPASVMHERPTPPPPAPVQL. The span at 32–44 shows a compositional bias: low complexity; sequence AAPASQPSQQPAS.

In terms of assembly, forms a complex composed of at least MKT1, PBP1, XAC1 and LSM12. Forms a complex composed of at least MKT1L, PBP1, XAC1 and LSM12.

Its subcellular location is the cytoplasm. Involved in post-transcriptional regulation of gene expression. The sequence is that of PBP1-interacting protein XAC1 from Trypanosoma brucei brucei (strain 927/4 GUTat10.1).